We begin with the raw amino-acid sequence, 796 residues long: Fibroblast growth factor receptor 3 (796 aa).

The first 19 residues, 1 to 19, serve as a signal peptide directing secretion; it reads MLVWLCGLCLVTLAGGRSA. The Extracellular portion of the chain corresponds to 20–358; sequence ARLPLTEGRP…AEPVPDVDTS (339 aa). Residues 21-119 form the Ig-like C2-type 1 domain; that stretch reads RLPLTEGRPT…VLRNVTVRVT (99 aa). A disulfide bridge links Cys-56 with Cys-102. 2 N-linked (GlcNAc...) asparagine glycosylation sites follow: Asn-91 and Asn-113. Positions 117 to 142 are disordered; the sequence is RVTDSPSSGDDEDDDEESESANAPKF. Residues 125–135 are compositionally biased toward acidic residues; the sequence is GDDEDDDEESE. Ig-like C2-type domains are found at residues 140–233 and 239–344; these read PKFT…YTLD and PHRP…AWLT. Cys-165 and Cys-217 are joined by a disulfide. N-linked (GlcNAc...) asparagine glycans are attached at residues Asn-214, Asn-251, Asn-283, Asn-304, and Asn-317. Cys-264 and Cys-328 are oxidised to a cystine. A helical membrane pass occupies residues 359 to 379; the sequence is VSILAAAGCVAVVILVVIIIF. Over 380–796 the chain is Cytoplasmic; it reads TYKMKMPSKK…HQQYNGVIRT (417 aa). The region spanning 457–746 is the Protein kinase domain; that stretch reads LTLGKPLGEG…LTVTSTDEYL (290 aa). Residues 463–471 and Lys-493 contribute to the ATP site; that span reads LGEGCFGQV. Asp-602 (proton acceptor) is an active-site residue. A phosphotyrosine; by autocatalysis mark is found at Tyr-632, Tyr-633, Tyr-709, and Tyr-745.

The protein belongs to the protein kinase superfamily. Tyr protein kinase family. Fibroblast growth factor receptor subfamily. As to quaternary structure, monomer. Homodimer after ligand binding. Autophosphorylated. Binding of FGF family members together with heparan sulfate proteoglycan or heparin promotes receptor dimerization and autophosphorylation on tyrosine residues. Autophosphorylation occurs in trans between the two FGFR molecules present in the dimer. In terms of tissue distribution, undetectable in the adult skeletal muscle. Low levels of expression were detected in the liver, lung and kidney. Medium levels of expression were detected in the heart, spleen, intestine and eye. Highest expression is observed in the testis.

The protein resides in the cell membrane. It catalyses the reaction L-tyrosyl-[protein] + ATP = O-phospho-L-tyrosyl-[protein] + ADP + H(+). Its activity is regulated as follows. Present in an inactive conformation in the absence of bound ligand. Ligand binding leads to dimerization and activation by autophosphorylation on tyrosine residues. Its function is as follows. Tyrosine-protein kinase that acts as a cell-surface receptor for fibroblast growth factors and plays an essential role in the regulation of cell proliferation, differentiation and apoptosis. Plays an essential role in the regulation of chondrocyte differentiation, proliferation and apoptosis, and is required for normal skeleton development. Regulates both osteogenesis and postnatal bone mineralization by osteoblasts. Promotes apoptosis in chondrocytes, but can also promote cancer cell proliferation. Phosphorylates PLCG1, CBL and FRS2. Ligand binding leads to the activation of several signaling cascades. Activation of PLCG1 leads to the production of the cellular signaling molecules diacylglycerol and inositol 1,4,5-trisphosphate. Phosphorylation of FRS2 triggers recruitment of GRB2, GAB1, PIK3R1 and SOS1, and mediates activation of RAS, MAPK1/ERK2, MAPK3/ERK1 and the MAP kinase signaling pathway, as well as of the AKT1 signaling pathway. In Pleurodeles waltl (Iberian ribbed newt), this protein is Fibroblast growth factor receptor 3 (FGFR3).